We begin with the raw amino-acid sequence, 137 residues long: Succinate dehydrogenase cytochrome b560 subunit (137 aa).

The next 2 helical transmembrane spans lie at 31–51 and 60–80; these read AFLATMVLFSILFFKIGDLSL and FFFLTFYLNWFIISLVNFTLL. His85 is a heme binding site. The chain crosses the membrane as a helical span at residues 106-126; that stretch reads VYTSGIIMLFCAAFLALLNII.

Belongs to the cytochrome b560 family. Forms part of complex II containing four subunits: a 70 kDa flavoprotein (FP), a 27 kDa iron-sulfur protein (IP), a cytochrome B and a membrane-anchoring protein. Heme is required as a cofactor.

The protein localises to the mitochondrion inner membrane. It participates in carbohydrate metabolism; tricarboxylic acid cycle. Functionally, membrane-anchoring subunit of succinate dehydrogenase (SDH) that is involved in complex II of the mitochondrial electron transport chain and is responsible for transferring electrons from succinate to ubiquinone (coenzyme Q). The protein is Succinate dehydrogenase cytochrome b560 subunit (SDH3) of Marchantia polymorpha (Common liverwort).